Here is an 869-residue protein sequence, read N- to C-terminus: Dimethylglycine dehydrogenase, mitochondrial (869 aa).

Residues 1-43 (MLRPGALRLRGLALRGSPRRPSSAGLREGQESPASPPEWKDRA) constitute a mitochondrion transit peptide. The tract at residues 14 to 39 (LRGSPRRPSSAGLREGQESPASPPEW) is disordered. FAD contacts are provided by residues 52–53 (CV), 73–74 (EK), and 80–88 (GSTWHAAGL). Position 84 is a tele-8alpha-FAD histidine (H84). K107 carries the post-translational modification N6-acetyllysine. N6-acetyllysine; alternate is present on K141. K141 carries the N6-succinyllysine; alternate modification. The residue at position 161 (K161) is an N6-acetyllysine. Residue V212 participates in FAD binding. Residue K216 is modified to N6-acetyllysine. W244 lines the FAD pocket. Residues K310 and K312 each carry the N6-succinyllysine modification. An N6-acetyllysine mark is found at K328 and K353. 390 to 395 (FGYGII) is an FAD binding site. An N6-acetyllysine; alternate mark is found at K427, K469, and K516. Residues K427, K469, and K516 each carry the N6-succinyllysine; alternate modification. Residue 573 to 575 (ELT) participates in (6S)-5,6,7,8-tetrahydrofolate binding. Position 648 is an N6-acetyllysine; alternate (K648). At K648 the chain carries N6-succinyllysine; alternate. (6S)-5,6,7,8-tetrahydrofolate-binding positions include Y669, 676–678 (ELY), and Y737. At K757 the chain carries N6-acetyllysine. Residue K786 is modified to N6-acetyllysine; alternate. N6-succinyllysine; alternate is present on K786. K788 is subject to N6-succinyllysine.

This sequence belongs to the GcvT family. FAD is required as a cofactor.

The protein localises to the mitochondrion. The catalysed reaction is (6S)-5,6,7,8-tetrahydrofolyl-(gamma-L-Glu)(n) + N,N-dimethylglycine + oxidized [electron-transfer flavoprotein] + H(+) = (6R)-5,10-methylenetetrahydrofolyl-(gamma-L-Glu)(n) + sarcosine + reduced [electron-transfer flavoprotein]. Its pathway is amine and polyamine degradation; betaine degradation; sarcosine from betaine: step 2/2. Catalyzes the demethylation of N,N-dimethylglycine to sarcosine. Also has activity with sarcosine in vitro. This Mus musculus (Mouse) protein is Dimethylglycine dehydrogenase, mitochondrial (Dmgdh).